The chain runs to 340 residues: Uroporphyrinogen decarboxylase (340 aa).

Substrate contacts are provided by residues 21–25 (RQAGR), Asp-71, Tyr-148, Ser-203, and His-316.

It belongs to the uroporphyrinogen decarboxylase family. As to quaternary structure, homodimer.

The protein localises to the cytoplasm. The catalysed reaction is uroporphyrinogen III + 4 H(+) = coproporphyrinogen III + 4 CO2. It functions in the pathway porphyrin-containing compound metabolism; protoporphyrin-IX biosynthesis; coproporphyrinogen-III from 5-aminolevulinate: step 4/4. In terms of biological role, catalyzes the decarboxylation of four acetate groups of uroporphyrinogen-III to yield coproporphyrinogen-III. The polypeptide is Uroporphyrinogen decarboxylase (Campylobacter jejuni subsp. jejuni serotype O:6 (strain 81116 / NCTC 11828)).